The primary structure comprises 317 residues: MSAVAPDGRKMLRLEVRNSQTPIERKPEWIKTRAKMGPEYTKMQNLVKSEGLHTVCQEAGCPNIYECWEDREATFLIGGDQCTRRCDFCQIDTGKPEALDRDEPRRVGESVVTMDLNYATITGVARDDLPDGGAWLYAETVRQIHEQTAGREAGRTKVELLAPDFNAVPELLREVFESRPEVFAHNVETVPRIFKRIRPGFRYERSLKVITDARDFGLVTKSNLILGMGETREEISEALKQLHEAGCELITITQYLRPSVRHHPVERWVKPQEFVELKEEAEQIGFSGVMSGPLVRSSYRAGRLYGMAMEQRRSATV.

[4Fe-4S] cluster contacts are provided by Cys56, Cys61, Cys67, Cys82, Cys86, Cys89, and Ser298. The 220-residue stretch at 68–287 (WEDREATFLI…KEEAEQIGFS (220 aa)) folds into the Radical SAM core domain.

This sequence belongs to the radical SAM superfamily. Lipoyl synthase family. [4Fe-4S] cluster is required as a cofactor.

Its subcellular location is the cytoplasm. The catalysed reaction is [[Fe-S] cluster scaffold protein carrying a second [4Fe-4S](2+) cluster] + N(6)-octanoyl-L-lysyl-[protein] + 2 oxidized [2Fe-2S]-[ferredoxin] + 2 S-adenosyl-L-methionine + 4 H(+) = [[Fe-S] cluster scaffold protein] + N(6)-[(R)-dihydrolipoyl]-L-lysyl-[protein] + 4 Fe(3+) + 2 hydrogen sulfide + 2 5'-deoxyadenosine + 2 L-methionine + 2 reduced [2Fe-2S]-[ferredoxin]. It functions in the pathway protein modification; protein lipoylation via endogenous pathway; protein N(6)-(lipoyl)lysine from octanoyl-[acyl-carrier-protein]: step 2/2. Functionally, catalyzes the radical-mediated insertion of two sulfur atoms into the C-6 and C-8 positions of the octanoyl moiety bound to the lipoyl domains of lipoate-dependent enzymes, thereby converting the octanoylated domains into lipoylated derivatives. In Streptomyces coelicolor (strain ATCC BAA-471 / A3(2) / M145), this protein is Lipoyl synthase.